The chain runs to 338 residues: Ketol-acid reductoisomerase (NADP(+)) (338 aa).

A KARI N-terminal Rossmann domain is found at 1-181 (MKVFYDKDCD…GGGRAGIIET (181 aa)). Residues 24 to 27 (YGSQ), Arg-47, and Ser-52 contribute to the NADP(+) site. The active site involves His-107. Gly-133 contributes to the NADP(+) binding site. A KARI C-terminal knotted domain is found at 182-327 (NFREETETDL…GKLRAMMPWI (146 aa)). Mg(2+) contacts are provided by Asp-190, Glu-194, Glu-226, and Glu-230. Residue Ser-251 coordinates substrate.

Belongs to the ketol-acid reductoisomerase family. The cofactor is Mg(2+).

The enzyme catalyses (2R)-2,3-dihydroxy-3-methylbutanoate + NADP(+) = (2S)-2-acetolactate + NADPH + H(+). It catalyses the reaction (2R,3R)-2,3-dihydroxy-3-methylpentanoate + NADP(+) = (S)-2-ethyl-2-hydroxy-3-oxobutanoate + NADPH + H(+). It functions in the pathway amino-acid biosynthesis; L-isoleucine biosynthesis; L-isoleucine from 2-oxobutanoate: step 2/4. It participates in amino-acid biosynthesis; L-valine biosynthesis; L-valine from pyruvate: step 2/4. Functionally, involved in the biosynthesis of branched-chain amino acids (BCAA). Catalyzes an alkyl-migration followed by a ketol-acid reduction of (S)-2-acetolactate (S2AL) to yield (R)-2,3-dihydroxy-isovalerate. In the isomerase reaction, S2AL is rearranged via a Mg-dependent methyl migration to produce 3-hydroxy-3-methyl-2-ketobutyrate (HMKB). In the reductase reaction, this 2-ketoacid undergoes a metal-dependent reduction by NADPH to yield (R)-2,3-dihydroxy-isovalerate. The sequence is that of Ketol-acid reductoisomerase (NADP(+)) from Bordetella pertussis (strain Tohama I / ATCC BAA-589 / NCTC 13251).